The following is a 637-amino-acid chain: Chaperone protein HtpG (637 aa).

The a; substrate-binding stretch occupies residues 1–328 (MADIEELKFD…SSDLPLNISR (328 aa)). Residues 329-556 (ETLQNNRIVE…DNSMDIRMER (228 aa)) form a b region. Positions 488–508 (IGASDDSGDKTSEDSGESASD) are disordered. The span at 494 to 508 (SGDKTSEDSGESASD) shows a compositional bias: basic and acidic residues. Residues 557 to 637 (FLREQKQLNY…GVLAKIFSSK (81 aa)) are c.

This sequence belongs to the heat shock protein 90 family. As to quaternary structure, homodimer.

Its subcellular location is the cytoplasm. Its function is as follows. Molecular chaperone. Has ATPase activity. The polypeptide is Chaperone protein HtpG (Anaplasma phagocytophilum (strain HZ)).